The primary structure comprises 462 residues: EPD1-interacting receptor-like cytoplasmic serine/threonine-protein kinase 5A (462 aa).

Positions 85–366 (FSSANFLGEG…DVVNILEPLL (282 aa)) constitute a Protein kinase domain. ATP contacts are provided by residues 91 to 99 (LGEGGFGPV) and Lys-120. 2 positions are modified to phosphotyrosine: Tyr-165 and Tyr-167. Asp-215 serves as the catalytic Proton acceptor.

Belongs to the protein kinase superfamily. Ser/Thr protein kinase family. In terms of assembly, interacts with the Verticillium dahliae elicitor EPD1 (AC G2WWH6). Phosphorylated at Tyr-165 and Tyr-167 in the presence of pathogen-associated molecular patterns (PAMPs); this triggers the expression of pathogenesis-related genes (e.g. PR5 and PR16). In terms of tissue distribution, mostly expressed in roots and, to a lesser extent, in leaves.

It localises to the cell membrane. The catalysed reaction is L-seryl-[protein] + ATP = O-phospho-L-seryl-[protein] + ADP + H(+). It catalyses the reaction L-threonyl-[protein] + ATP = O-phospho-L-threonyl-[protein] + ADP + H(+). Its function is as follows. Required for pathogen-associated molecular pattern (PAMP, e.g. chitin and flg22)-triggered immunity (PTI) involving reactive oxygen species (ROS) accumulation and triggering plant defense, including defense-related gene expression (e.g. PR1 and LOX). Ensures specific recognition of the EPD1 effector of Verticillium dahliae, resulting in a hypersensitive response known as effector-triggered immunity (ETI), characterized by the activation of programmed cell death to limit infection by the pathogen. Priming plants with the incompatible pathogen V.dahliae leads to an increased resistance to compatible pathogens, as a result of systemic acquired resistance (SAR). The protein is EPD1-interacting receptor-like cytoplasmic serine/threonine-protein kinase 5A of Gossypium barbadense (Sea Island cotton).